Here is a 2837-residue protein sequence, read N- to C-terminus: Bifunctional DNA-directed RNA polymerase subunit beta-beta' (2837 aa).

Residues 1 to 1433 are DNA-directed RNA polymerase subunit beta; that stretch reads MVDSSYMYAS…CLNVDLKQND (1433 aa). Residues 1436–2837 are DNA-directed RNA polymerase subunit beta'; the sequence is IEDISHTNIA…ESVVAYDQSN (1402 aa). Zn(2+) contacts are provided by Cys-1501, Cys-1503, Cys-1516, and Cys-1519. Residues Asp-1893, Asp-1895, and Asp-1897 each coordinate Mg(2+). Cys-2235, Cys-2309, Cys-2316, and Cys-2319 together coordinate Zn(2+).

The protein in the N-terminal section; belongs to the RNA polymerase beta chain family. In the C-terminal section; belongs to the RNA polymerase beta' chain family. As to quaternary structure, the RNAP catalytic core consists of 2 alpha, 1 beta/beta' and 1 omega subunit. When a sigma factor is associated with the core the holoenzyme is formed, which can initiate transcription. It depends on Mg(2+) as a cofactor. Requires Zn(2+) as cofactor.

It catalyses the reaction RNA(n) + a ribonucleoside 5'-triphosphate = RNA(n+1) + diphosphate. DNA-dependent RNA polymerase catalyzes the transcription of DNA into RNA using the four ribonucleoside triphosphates as substrates. In Wolbachia pipientis wMel, this protein is Bifunctional DNA-directed RNA polymerase subunit beta-beta' (rpoBC).